The following is a 287-amino-acid chain: ATP synthase gamma chain (287 aa).

This sequence belongs to the ATPase gamma chain family. In terms of assembly, F-type ATPases have 2 components, CF(1) - the catalytic core - and CF(0) - the membrane proton channel. CF(1) has five subunits: alpha(3), beta(3), gamma(1), delta(1), epsilon(1). CF(0) has three main subunits: a, b and c.

Its subcellular location is the cell inner membrane. Functionally, produces ATP from ADP in the presence of a proton gradient across the membrane. The gamma chain is believed to be important in regulating ATPase activity and the flow of protons through the CF(0) complex. This chain is ATP synthase gamma chain, found in Parabacteroides distasonis (strain ATCC 8503 / DSM 20701 / CIP 104284 / JCM 5825 / NCTC 11152).